Here is a 483-residue protein sequence, read N- to C-terminus: Glycogen synthase (483 aa).

Residue Lys15 participates in ADP-alpha-D-glucose binding.

This sequence belongs to the glycosyltransferase 1 family. Bacterial/plant glycogen synthase subfamily.

The enzyme catalyses [(1-&gt;4)-alpha-D-glucosyl](n) + ADP-alpha-D-glucose = [(1-&gt;4)-alpha-D-glucosyl](n+1) + ADP + H(+). It functions in the pathway glycan biosynthesis; glycogen biosynthesis. Its function is as follows. Synthesizes alpha-1,4-glucan chains using ADP-glucose. The sequence is that of Glycogen synthase from Petrotoga mobilis (strain DSM 10674 / SJ95).